The sequence spans 793 residues: Signal transducer and activator of transcription 5A (793 aa).

At tyrosine 90 the chain carries Phosphotyrosine. Serine 128 bears the Phosphoserine mark. The SH2 domain occupies 589–686 (WNDGAILGFV…EVFAKYYTPV (98 aa)). Phosphotyrosine occurs at positions 682 and 694. Position 779 is a phosphoserine (serine 779).

It belongs to the transcription factor STAT family. Forms a homodimer or a heterodimer with a related family member. Interacts with NCOA1 and SOCS7. Binds NR3C1. Interacts with ERBB4. Interacts with EBF4. Interacts with CD69. In terms of processing, ISGylated. Tyrosine phosphorylated in response to KITLG/SCF, IL2, IL3, IL7, IL15, CSF2/GMCSF, GH1, PRL, EPO and THPO. Activated KIT promotes phosphorylation on tyrosine residues and subsequent translocation to the nucleus. Tyrosine phosphorylated in response to constitutively activated FGFR1, FGFR2, FGFR3 and FGFR4. Tyrosine phosphorylation is required for DNA-binding activity and dimerization. Serine phosphorylation is also required for maximal transcriptional activity. Tyrosine phosphorylated in response to signaling via activated FLT3; wild-type FLT3 results in much weaker phosphorylation than constitutively activated mutant FLT3. Alternatively, can be phosphorylated by JAK2 at Tyr-694. In terms of tissue distribution, in the virgin, found in most tissues except brain and muscle. During lactation, abundantly found in mammary tissue, as well as in other secretory organs such as salivary gland and seminal vesicle.

Its subcellular location is the cytoplasm. It is found in the nucleus. Carries out a dual function: signal transduction and activation of transcription. Mediates cellular responses to the cytokine KITLG/SCF and other growth factors. May mediate cellular responses to activated FGFR1, FGFR2, FGFR3 and FGFR4. Binds to the GAS element and activates PRL-induced transcription. Regulates the expression of milk proteins during lactation. This is Signal transducer and activator of transcription 5A (Stat5a) from Mus musculus (Mouse).